Here is a 416-residue protein sequence, read N- to C-terminus: TNF receptor-associated factor 1 (416 aa).

The disordered stretch occupies residues 1–24 (MASSSGSSPRPAPDENEFPFGCPP). Residue Ser146 is modified to Phosphoserine. Positions 182–264 (MKEKLLAELE…QSLRLMEEAS (83 aa)) form a coiled coil. Glycyl lysine isopeptide (Lys-Gly) (interchain with G-Cter in ubiquitin) cross-links involve residues Lys185 and Lys193. Residues 266-412 (DGTFLWKITN…DDTMFLKCIV (147 aa)) enclose the MATH domain.

In terms of assembly, homotrimer. Heterotrimer with TRAF2. Interacts with TNFRSF1A/TNFR1, TNFRSF1B/TNFR2, TNFRSF4, TNFRSF5/CD40, TNFRSF8/CD30, TNFRSF9/CD137, TNFRSF11A/RANK, TNFRSF13C, TNFRSF18/AITR, TNFRSF17/BCMA, TNFRSF19/TROY, TNFRSF19L/RELT, XEDAR, EDAR, Epstein-Barr virus BNFL1/LMP-1, TANK/ITRAF, TRAIP and RIPK2. Interacts with BIRC2 and BIRC3 N-terminus; a single BIRC2 or BIRC3 molecule interacts with a heterotrimer formed by TRAF1 and TRAF2. Interacts with NFATC2IP, TRAFD1 and with HIVEP3. Interacts with MAP3K14. Interacts with GPS2. Polyubiquitinated by BIRC2 and/or BIRC3, leading to its subsequent proteasomal degradation. Ubiquitinated by the SCF(FBXL2) complex, leading to its degradation by the proteasome.

In terms of biological role, adapter molecule that regulates the activation of NF-kappa-B and JNK. Plays a role in the regulation of cell survival and apoptosis. The heterotrimer formed by TRAF1 and TRAF2 is part of a E3 ubiquitin-protein ligase complex that promotes ubiquitination of target proteins, such as MAP3K14. The TRAF1/TRAF2 complex recruits the antiapoptotic E3 protein-ubiquitin ligases BIRC2 and BIRC3 to TNFRSF1B/TNFR2. This chain is TNF receptor-associated factor 1 (TRAF1), found in Homo sapiens (Human).